The primary structure comprises 282 residues: Bifunctional protein FolD (282 aa).

NADP(+) is bound by residues 164 to 166 (GRS) and Ser189.

Belongs to the tetrahydrofolate dehydrogenase/cyclohydrolase family. As to quaternary structure, homodimer.

The catalysed reaction is (6R)-5,10-methylene-5,6,7,8-tetrahydrofolate + NADP(+) = (6R)-5,10-methenyltetrahydrofolate + NADPH. It catalyses the reaction (6R)-5,10-methenyltetrahydrofolate + H2O = (6R)-10-formyltetrahydrofolate + H(+). The protein operates within one-carbon metabolism; tetrahydrofolate interconversion. Its function is as follows. Catalyzes the oxidation of 5,10-methylenetetrahydrofolate to 5,10-methenyltetrahydrofolate and then the hydrolysis of 5,10-methenyltetrahydrofolate to 10-formyltetrahydrofolate. This chain is Bifunctional protein FolD, found in Lactobacillus helveticus (strain DPC 4571).